A 423-amino-acid chain; its full sequence is AP-1 complex subunit mu-1 (423 aa).

N-acetylserine is present on Ser-2. Phosphothreonine occurs at positions 152, 154, and 223. One can recognise an MHD domain in the interval 168 to 421 (KNEVFLDVIE…ITQNGDYQLR (254 aa)).

It belongs to the adaptor complexes medium subunit family. As to quaternary structure, adaptor protein complex 1 (AP-1) is a heterotetramer composed of two large adaptins (gamma-type subunit AP1G1 and beta-type subunit AP1B1), a medium adaptin (mu-type subunit AP1M1 or AP1M2) and a small adaptin (sigma-type subunit AP1S1 or AP1S2 or AP1S3). Interacts with MARCHF11. Post-translationally, phosphorylation of membrane-bound AP1M1/AP1M2 increases its affinity for sorting signals.

The protein localises to the cytoplasmic vesicle. It is found in the clathrin-coated vesicle membrane. The protein resides in the golgi apparatus. Its function is as follows. Subunit of clathrin-associated adaptor protein complex 1 that plays a role in protein sorting in the trans-Golgi network (TGN) and endosomes. The AP complexes mediate the recruitment of clathrin to membranes and the recognition of sorting signals within the cytosolic tails of transmembrane cargo molecules. The polypeptide is AP-1 complex subunit mu-1 (Rattus norvegicus (Rat)).